The following is a 78-amino-acid chain: MSEIASRVKAIIVDKLGVEESEVTETASFTNDLGADSLDTVELIMEFEKEFGISIPDDQAEKIGTVQDAVAYIEEHAK.

Positions 2-77 (SEIASRVKAI…DAVAYIEEHA (76 aa)) constitute a Carrier domain. Ser37 bears the O-(pantetheine 4'-phosphoryl)serine mark.

This sequence belongs to the acyl carrier protein (ACP) family. Post-translationally, 4'-phosphopantetheine is transferred from CoA to a specific serine of apo-ACP by AcpS. This modification is essential for activity because fatty acids are bound in thioester linkage to the sulfhydryl of the prosthetic group.

It is found in the cytoplasm. It participates in lipid metabolism; fatty acid biosynthesis. Its function is as follows. Carrier of the growing fatty acid chain in fatty acid biosynthesis. This is Acyl carrier protein from Bacteroides fragilis (strain ATCC 25285 / DSM 2151 / CCUG 4856 / JCM 11019 / LMG 10263 / NCTC 9343 / Onslow / VPI 2553 / EN-2).